The chain runs to 137 residues: Global transcriptional regulator Spx (137 aa).

Residues cysteine 10 and cysteine 13 are joined by a disulfide bond.

It belongs to the ArsC family. Spx subfamily. In terms of assembly, interacts with the C-terminal domain of the alpha subunit of the RNAP.

The protein localises to the cytoplasm. Its function is as follows. Global transcriptional regulator that plays a key role in stress response and exerts either positive or negative regulation of genes. Acts by interacting with the C-terminal domain of the alpha subunit of the RNA polymerase (RNAP). This interaction can enhance binding of RNAP to the promoter region of target genes and stimulate their transcription, or block interaction of RNAP with activator. This Streptococcus agalactiae serotype III (strain NEM316) protein is Global transcriptional regulator Spx.